A 576-amino-acid polypeptide reads, in one-letter code: Arginine--tRNA ligase (576 aa).

A 'HIGH' region motif is present at residues 122-132; it reads PNVAKEMHVGH.

This sequence belongs to the class-I aminoacyl-tRNA synthetase family. Monomer.

The protein localises to the cytoplasm. It carries out the reaction tRNA(Arg) + L-arginine + ATP = L-arginyl-tRNA(Arg) + AMP + diphosphate. The sequence is that of Arginine--tRNA ligase from Thermobifida fusca (strain YX).